A 130-amino-acid polypeptide reads, in one-letter code: Gloverin (130 aa).

Hemolymph.

The protein localises to the secreted. Functionally, antibacterial protein active against Gram-negative bacteria. The protein is Gloverin of Hyalophora cecropia (Cecropia moth).